The primary structure comprises 506 residues: UPF0371 protein FN1121 (506 aa).

It belongs to the UPF0371 family.

This chain is UPF0371 protein FN1121, found in Fusobacterium nucleatum subsp. nucleatum (strain ATCC 25586 / DSM 15643 / BCRC 10681 / CIP 101130 / JCM 8532 / KCTC 2640 / LMG 13131 / VPI 4355).